Reading from the N-terminus, the 789-residue chain is Protein FLOWERING LOCUS D (789 aa).

Residues 1-23 (MVSFSAPKKRRRGRSQRSMSSLN) are disordered. The region spanning 76–177 (NKEATTEALL…FGIAQAIKDK (102 aa)) is the SWIRM domain. Residues Ser-195, Glu-214, Arg-216, Arg-222, and 240–243 (GGSV) contribute to the FAD site. A Glycyl lysine isopeptide (Lys-Gly) (interchain with G-Cter in SUMO) cross-link involves residue Lys-287. FAD is bound by residues Glu-595, 604–605 (TM), and 607–612 (GAFVTG). Residues Lys-693 and Lys-770 each participate in a glycyl lysine isopeptide (Lys-Gly) (interchain with G-Cter in SUMO) cross-link.

The protein belongs to the flavin monoamine oxidase family. In terms of assembly, interacts with HDA6. Requires FAD as cofactor. Post-translationally, sumoylated at Lys-287, Lys-693 and Lys-770 by SIZ1. Sumoylation alters its activity and the histone H4 acetylation status of FLC locus, promoting FLC expression.

Functionally, probable histone demethylase that promotes flowering independently of the photoperiod and vernalization pathways by repressing FLOWERING LOCUS C (FLC), a floral repressor that blocks the transition from vegetative to reproductive development. Probably mediates histone H3 'Lys-4' demethylation at FLC locus. Seems to act in partial redundancy with LDL1 and LDL2 to repress FLC expression. Required for histone H4 deacetylation of FLC locus. May be a component of the histone deacetylase complex. Forms a histone deacetylase complex with HDA5, HDA6 and MSI4/FVE that represses FLC gene expression to control flowering time. Required for systemic acquired resistance (SAR) toward pathogenic bacteria (e.g. Pseudomonas syringae pv tomato DC3000 (avrPto)). Together with FLD and MSI4/FVE, contributes to dehydroabietinal-dependent (DA, a diterpenoid tricyclic diterpene) activation of flowering ans SAR. The sequence is that of Protein FLOWERING LOCUS D from Arabidopsis thaliana (Mouse-ear cress).